Consider the following 364-residue polypeptide: tRNA 2-selenouridine synthase (364 aa).

The Rhodanese domain occupies 14–137 (LIADTPIIDV…LRQTAIQATI (124 aa)). Catalysis depends on C97, which acts as the S-selanylcysteine intermediate.

It belongs to the SelU family. Monomer.

The catalysed reaction is 5-methylaminomethyl-2-thiouridine(34) in tRNA + selenophosphate + (2E)-geranyl diphosphate + H2O + H(+) = 5-methylaminomethyl-2-selenouridine(34) in tRNA + (2E)-thiogeraniol + phosphate + diphosphate. The enzyme catalyses 5-methylaminomethyl-2-thiouridine(34) in tRNA + (2E)-geranyl diphosphate = 5-methylaminomethyl-S-(2E)-geranyl-thiouridine(34) in tRNA + diphosphate. It catalyses the reaction 5-methylaminomethyl-S-(2E)-geranyl-thiouridine(34) in tRNA + selenophosphate + H(+) = 5-methylaminomethyl-2-(Se-phospho)selenouridine(34) in tRNA + (2E)-thiogeraniol. It carries out the reaction 5-methylaminomethyl-2-(Se-phospho)selenouridine(34) in tRNA + H2O = 5-methylaminomethyl-2-selenouridine(34) in tRNA + phosphate. Its function is as follows. Involved in the post-transcriptional modification of the uridine at the wobble position (U34) of tRNA(Lys), tRNA(Glu) and tRNA(Gln). Catalyzes the conversion of 2-thiouridine (S2U-RNA) to 2-selenouridine (Se2U-RNA). Acts in a two-step process involving geranylation of 2-thiouridine (S2U) to S-geranyl-2-thiouridine (geS2U) and subsequent selenation of the latter derivative to 2-selenouridine (Se2U) in the tRNA chain. The sequence is that of tRNA 2-selenouridine synthase from Escherichia coli O127:H6 (strain E2348/69 / EPEC).